Consider the following 450-residue polypeptide: Tripartite motif-containing protein 77 (450 aa).

The RING-type zinc-finger motif lies at 15–56; it reads CSICTDYLTDPVTICCGHRFCSPCLCLLWEDTLTPNCCPVCR. The B box-type zinc-finger motif lies at 88-131; it reads SAMLICRRHQEIKNLICETDRSLLCFLCSQSPRHATHKHYMTRE. Residues C93, H96, C115, and H121 each coordinate Zn(2+). The B30.2/SPRY domain occupies 269-450; that stretch reads QLSAWTITGV…LRPFICHGSK (182 aa).

The protein belongs to the TRIM/RBCC family.

This is Tripartite motif-containing protein 77 (TRIM77) from Homo sapiens (Human).